A 440-amino-acid polypeptide reads, in one-letter code: 2-alpha-hydroxytaxane 2-O-benzoyltransferase (440 aa).

Residues histidine 158 and aspartate 367 each act as proton acceptor in the active site.

Belongs to the plant acyltransferase family.

The enzyme catalyses 10-deacetyl-2-debenzoylbaccatin III + benzoyl-CoA = 10-deacetylbaccatin III + CoA. It functions in the pathway alkaloid biosynthesis; taxol biosynthesis; baccatin III from 10-deacetyl-2-debenzoylbaccatin III: step 1/2. Its function is as follows. Catalyzes the conversion of 2-debenzoyl-7,13-diacetylbaccatin III, a semisynthetic substrate, to 7,13-diacetylbaccatin III. The sequence is that of 2-alpha-hydroxytaxane 2-O-benzoyltransferase from Taxus cuspidata (Japanese yew).